Here is a 456-residue protein sequence, read N- to C-terminus: Senecionine N-oxygenase (456 aa).

An N-terminal signal peptide occupies residues methionine 1–alanine 22. Glycine 32–glycine 37 contacts FAD. Glycine 215 to glycine 220 serves as a coordination point for NADP(+).

This sequence belongs to the FMO family. In terms of assembly, homotetramer. It depends on FAD as a cofactor. Hemolymph.

The protein resides in the secreted. The catalysed reaction is senecionine + NADPH + O2 = senecionine N-oxide + NADP(+) + H2O. Its function is as follows. NADPH-dependent monooxygenase that detoxifies senecionine and similar plant alkaloids that are ingested by the larvae. Is active towards a narrow range of related substrates with highest activity towards senecionine, followed by seneciphylline, retrorsine, monocrotaline, senecivernine, axillarine and axillaridine. The protein is Senecionine N-oxygenase (sno1) of Tyria jacobaeae (Cinnabar moth).